The primary structure comprises 294 residues: Protoheme IX farnesyltransferase 1 (294 aa).

The next 9 helical transmembrane spans lie at 8–28, 35–55, 82–102, 107–127, 132–152, 162–182, 208–228, 229–249, and 263–283; these read VTKPGIIMGNLISVAGGFLLA, PWLMVATLIGLSLVVASGCAI, AMAALCHGVVLGIIGFGLLIA, AAVFFAAFGYFIYVGVYSLYM, VYGTFIGSLSGAVPPVVGYCA, LILLVMFSLWQMPHSYAIAIF, IVLYIAIYALVVMLLPISGYT, GAAFMAVACITSFWWLLMALR, and QVFAFSIINITALSIAMAVDY.

Belongs to the UbiA prenyltransferase family. Protoheme IX farnesyltransferase subfamily.

It localises to the cell inner membrane. It catalyses the reaction heme b + (2E,6E)-farnesyl diphosphate + H2O = Fe(II)-heme o + diphosphate. It participates in porphyrin-containing compound metabolism; heme O biosynthesis; heme O from protoheme: step 1/1. Functionally, converts heme B (protoheme IX) to heme O by substitution of the vinyl group on carbon 2 of heme B porphyrin ring with a hydroxyethyl farnesyl side group. The sequence is that of Protoheme IX farnesyltransferase 1 from Pseudoalteromonas translucida (strain TAC 125).